A 218-amino-acid polypeptide reads, in one-letter code: NAD(P)H-quinone oxidoreductase subunit I (218 aa).

4Fe-4S ferredoxin-type domains are found at residues 55 to 84 and 95 to 124; these read GRIH…VDWV and RNYS…MTEE. [4Fe-4S] cluster is bound by residues Cys64, Cys67, Cys70, Cys74, Cys104, Cys107, Cys110, and Cys114. The interval 169 to 218 is disordered; the sequence is MDPHELPANQQRAGKLPSQIIKELQAEKSEEKGNNNSSDIVPNKLNSTNK. Positions 192-201 are enriched in basic and acidic residues; sequence LQAEKSEEKG. A compositionally biased stretch (polar residues) spans 202 to 218; sequence NNNSSDIVPNKLNSTNK.

It belongs to the complex I 23 kDa subunit family. In terms of assembly, NDH-1 is composed of at least 11 different subunits. It depends on [4Fe-4S] cluster as a cofactor.

The protein resides in the cellular thylakoid membrane. The enzyme catalyses a plastoquinone + NADH + (n+1) H(+)(in) = a plastoquinol + NAD(+) + n H(+)(out). It carries out the reaction a plastoquinone + NADPH + (n+1) H(+)(in) = a plastoquinol + NADP(+) + n H(+)(out). Functionally, NDH-1 shuttles electrons from an unknown electron donor, via FMN and iron-sulfur (Fe-S) centers, to quinones in the respiratory and/or the photosynthetic chain. The immediate electron acceptor for the enzyme in this species is believed to be plastoquinone. Couples the redox reaction to proton translocation, and thus conserves the redox energy in a proton gradient. The sequence is that of NAD(P)H-quinone oxidoreductase subunit I from Prochlorococcus marinus (strain NATL1A).